The sequence spans 616 residues: Dihydroxy-acid dehydratase (616 aa).

D81 provides a ligand contact to Mg(2+). C122 is a [2Fe-2S] cluster binding site. Positions 123 and 124 each coordinate Mg(2+). K124 bears the N6-carboxylysine mark. Position 195 (C195) interacts with [2Fe-2S] cluster. Position 491 (E491) interacts with Mg(2+). Residue S517 is the Proton acceptor of the active site.

Belongs to the IlvD/Edd family. In terms of assembly, homodimer. It depends on [2Fe-2S] cluster as a cofactor. Requires Mg(2+) as cofactor.

It catalyses the reaction (2R)-2,3-dihydroxy-3-methylbutanoate = 3-methyl-2-oxobutanoate + H2O. The enzyme catalyses (2R,3R)-2,3-dihydroxy-3-methylpentanoate = (S)-3-methyl-2-oxopentanoate + H2O. The protein operates within amino-acid biosynthesis; L-isoleucine biosynthesis; L-isoleucine from 2-oxobutanoate: step 3/4. Its pathway is amino-acid biosynthesis; L-valine biosynthesis; L-valine from pyruvate: step 3/4. Its function is as follows. Functions in the biosynthesis of branched-chain amino acids. Catalyzes the dehydration of (2R,3R)-2,3-dihydroxy-3-methylpentanoate (2,3-dihydroxy-3-methylvalerate) into 2-oxo-3-methylpentanoate (2-oxo-3-methylvalerate) and of (2R)-2,3-dihydroxy-3-methylbutanoate (2,3-dihydroxyisovalerate) into 2-oxo-3-methylbutanoate (2-oxoisovalerate), the penultimate precursor to L-isoleucine and L-valine, respectively. The sequence is that of Dihydroxy-acid dehydratase from Methylobacillus flagellatus (strain ATCC 51484 / DSM 6875 / VKM B-1610 / KT).